A 418-amino-acid chain; its full sequence is UDP-glucuronic acid decarboxylase 1 (418 aa).

Over 1-17 the chain is Cytoplasmic; it reads MMRMSWMVTVINRRMMK. A helical; Signal-anchor for type II membrane protein transmembrane segment spans residues 18–38; the sequence is ILIALALIAYIASVWGTYANM. The Lumenal portion of the chain corresponds to 39 to 418; sequence RSIQEHGEMK…RMKKGRPRHN (380 aa). NAD(+) contacts are provided by Gly-96, Phe-97, Val-98, Asp-117, Asn-118, Phe-120, Thr-121, Gly-122, Asp-142, and Val-143. Positions 147 and 148 each coordinate UDP-alpha-D-glucuronate. 2 residues coordinate NAD(+): Leu-157 and Ser-159. Residue Lys-175 coordinates UDP-alpha-D-glucuronate. NAD(+) is bound at residue Thr-176. Residues Asn-183, Gly-186, Lys-189, and Arg-190 each coordinate UDP-alpha-D-glucuronate. Residues Ala-198, Tyr-229, and Lys-233 each coordinate NAD(+). Tyr-229 serves as the catalytic Proton acceptor. Tyr-243, Gln-246, and Glu-247 together coordinate UDP-alpha-D-glucuronate. Residues Thr-259, His-265, and Arg-270 each coordinate NAD(+). 2 N-linked (GlcNAc...) asparagine glycosylation sites follow: Asn-314 and Asn-383. The interval 397–418 is disordered; the sequence is ANNQYIPKPKAARMKKGRPRHN. Over residues 406-418 the composition is skewed to basic residues; the sequence is KAARMKKGRPRHN.

It belongs to the NAD(P)-dependent epimerase/dehydratase family. UDP-glucuronic acid decarboxylase subfamily. As to quaternary structure, homodimer and homotetramer. NAD(+) serves as cofactor.

Its subcellular location is the golgi apparatus. The protein resides in the golgi stack membrane. It catalyses the reaction UDP-alpha-D-glucuronate + H(+) = UDP-alpha-D-xylose + CO2. It participates in nucleotide-sugar biosynthesis; UDP-alpha-D-xylose biosynthesis; UDP-alpha-D-xylose from UDP-alpha-D-glucuronate: step 1/1. Catalyzes the NAD-dependent decarboxylation of UDP-glucuronic acid to UDP-xylose. Necessary for the biosynthesis of the core tetrasaccharide in glycosaminoglycan biosynthesis. Essential during embryogenesis for craniofacial development. The polypeptide is UDP-glucuronic acid decarboxylase 1 (Danio rerio (Zebrafish)).